Reading from the N-terminus, the 668-residue chain is Transketolase 2 (668 aa).

Residue His26 coordinates substrate. Thiamine diphosphate is bound by residues His66 and 114–116 (GPL). Asp155 provides a ligand contact to Mg(2+). The thiamine diphosphate site is built by Gly156 and Asn185. Residues Asn185 and Ile187 each contribute to the Mg(2+) site. Residues His261, Arg358, and Ser385 each coordinate substrate. His261 serves as a coordination point for thiamine diphosphate. Glu413 serves as the catalytic Proton donor. A thiamine diphosphate-binding site is contributed by Phe439. Residues His463, Asp471, and Arg522 each contribute to the substrate site.

The protein belongs to the transketolase family. Homodimer. It depends on Mg(2+) as a cofactor. The cofactor is Ca(2+). Requires Mn(2+) as cofactor. Co(2+) serves as cofactor. Thiamine diphosphate is required as a cofactor.

The catalysed reaction is D-sedoheptulose 7-phosphate + D-glyceraldehyde 3-phosphate = aldehydo-D-ribose 5-phosphate + D-xylulose 5-phosphate. Its function is as follows. Catalyzes the transfer of a two-carbon ketol group from a ketose donor to an aldose acceptor, via a covalent intermediate with the cofactor thiamine pyrophosphate. The sequence is that of Transketolase 2 (tktB) from Pasteurella multocida (strain Pm70).